The following is a 254-amino-acid chain: Thiazole synthase (254 aa).

Lys-95 acts as the Schiff-base intermediate with DXP in catalysis. 1-deoxy-D-xylulose 5-phosphate-binding positions include Gly-156, 182–183, and 204–205; these read AG and NT.

This sequence belongs to the ThiG family. Homotetramer. Forms heterodimers with either ThiH or ThiS.

It is found in the cytoplasm. The enzyme catalyses [ThiS sulfur-carrier protein]-C-terminal-Gly-aminoethanethioate + 2-iminoacetate + 1-deoxy-D-xylulose 5-phosphate = [ThiS sulfur-carrier protein]-C-terminal Gly-Gly + 2-[(2R,5Z)-2-carboxy-4-methylthiazol-5(2H)-ylidene]ethyl phosphate + 2 H2O + H(+). Its pathway is cofactor biosynthesis; thiamine diphosphate biosynthesis. Catalyzes the rearrangement of 1-deoxy-D-xylulose 5-phosphate (DXP) to produce the thiazole phosphate moiety of thiamine. Sulfur is provided by the thiocarboxylate moiety of the carrier protein ThiS. In vitro, sulfur can be provided by H(2)S. In Shewanella piezotolerans (strain WP3 / JCM 13877), this protein is Thiazole synthase.